Reading from the N-terminus, the 201-residue chain is MAIAVAGPEIERLIQLLARLPGLGPRSARRAALHLIKKRDALMTPLASALQVAIDKIEVCKTCGNIDTQNPCTVCTDPRRDPSIIVVVADVADLWALERASATNGRYHVLGATLSPLDGVGPDDLTIDALVARAHDPAVGEIILALNATVDGQTTAHYVTDLLQDANVKVTRLAHGVPVGGELDYLDEGTLSAAMRQRTLF.

The C4-type zinc finger occupies 60-75; it reads CKTCGNIDTQNPCTVC. One can recognise a Toprim domain in the interval 83-178; the sequence is SIIVVVADVA…KVTRLAHGVP (96 aa).

Belongs to the RecR family.

May play a role in DNA repair. It seems to be involved in an RecBC-independent recombinational process of DNA repair. It may act with RecF and RecO. The polypeptide is Recombination protein RecR (Rhodopseudomonas palustris (strain HaA2)).